We begin with the raw amino-acid sequence, 238 residues long: Type III secretion protein hrcQa (238 aa).

The segment at 66-238 (DAEALLSLLG…SHEEHRHHEY (173 aa)) is hrcQa-C.

As to quaternary structure, interacts with hrcQb.

It localises to the cell inner membrane. In terms of biological role, component of the type III secretion system, which is required for effector protein delivery, parasitism, and pathogenicity. Probably participates in the formation of a C-ring-like assembly along with hrcQb. This Pseudomonas savastanoi pv. phaseolicola (Pseudomonas syringae pv. phaseolicola) protein is Type III secretion protein hrcQa (hrcQa).